The sequence spans 314 residues: Protein nutcracker (314 aa).

Residues Met-1–Gln-62 form a disordered region. Residues Gln-21–Gln-34 show a composition bias toward low complexity. Residues Met-257 to Ser-314 are required for interaction with skpA and Cul1, but not with PI31. One can recognise an F-box domain in the interval Gln-264–Leu-309.

As to quaternary structure, component of an SCF (SKP1-CUL1-F-box protein) E3 ubiquitin-protein ligase complex, at least composed of ntc, skpA and Cul1. Interacts (via F-box domain) with skpA and Cul1. Interacts with Prosalpha7 and PI31. Interacts with Bruce. As to expression, expressed in testis (at protein level).

Its subcellular location is the cytoplasm. Functions together with PI31 to control non-apoptotic caspase activation during sperm individualization. Positively regulates PI31 stability. The polypeptide is Protein nutcracker (Drosophila melanogaster (Fruit fly)).